We begin with the raw amino-acid sequence, 216 residues long: Ribosomal RNA large subunit methyltransferase E (216 aa).

The S-adenosyl-L-methionine site is built by Gly-67, Trp-69, Asp-87, Asp-103, and Asp-128. Catalysis depends on Lys-168, which acts as the Proton acceptor.

This sequence belongs to the class I-like SAM-binding methyltransferase superfamily. RNA methyltransferase RlmE family.

Its subcellular location is the cytoplasm. It catalyses the reaction uridine(2552) in 23S rRNA + S-adenosyl-L-methionine = 2'-O-methyluridine(2552) in 23S rRNA + S-adenosyl-L-homocysteine + H(+). Its function is as follows. Specifically methylates the uridine in position 2552 of 23S rRNA at the 2'-O position of the ribose in the fully assembled 50S ribosomal subunit. The polypeptide is Ribosomal RNA large subunit methyltransferase E (Acinetobacter baylyi (strain ATCC 33305 / BD413 / ADP1)).